The primary structure comprises 548 residues: 4-methyl-5-nitrocatechol 5-monooxygenase (548 aa).

It belongs to the PheA/TfdB FAD monooxygenase family. Monomer. FAD is required as a cofactor.

It catalyses the reaction 4-methyl-5-nitrocatechol + NADPH + O2 = 2-hydroxy-5-methylquinone + nitrite + NADP(+) + H2O + H(+). The catalysed reaction is 4-methyl-5-nitrocatechol + NADH + O2 = 2-hydroxy-5-methylquinone + nitrite + NAD(+) + H2O + H(+). With respect to regulation, activated by magnesium or manganese ions. Inhibited by concentrations of 4-methyl-5-nitrocatechol (MNC) above 2 mM. Its function is as follows. Involved in the degradation of 2,4-dinitrotoluene (2,4-DNT). Catalyzes the removal of the nitro group from 4-methyl-5-nitrocatechol (MNC) to yield 2-hydroxy-5-methylquinone. It can use both NADH and NADPH as electron donors, but prefers NADPH. Also able to use 4-nitrocatechol as substrate. The sequence is that of 4-methyl-5-nitrocatechol 5-monooxygenase from Burkholderia sp.